The primary structure comprises 168 residues: WAP four-disulfide core domain protein 2 (168 aa).

A signal peptide spans 1-30 (MPACRLCLLATGLLLGLLLFTPLSATGTRA). 2 consecutive WAP domains span residues 31–74 (EKPG…SKPN) and 119–167 (NGEK…TTPK). 4 disulfides stabilise this stretch: Cys-36–Cys-62, Cys-45–Cys-66, Cys-49–Cys-61, and Cys-55–Cys-70. The interval 100–123 (PLSRGQVSTKPPVVTKEGGNGEKQ) is disordered. Cystine bridges form between Cys-126–Cys-154, Cys-137–Cys-158, Cys-141–Cys-153, and Cys-147–Cys-163.

Homotrimer; disulfide-linked.

It localises to the secreted. Its function is as follows. Broad range protease inhibitor. The chain is WAP four-disulfide core domain protein 2 (Wfdc2) from Rattus norvegicus (Rat).